Consider the following 367-residue polypeptide: Molybdopterin synthase catalytic subunit (367 aa).

Residues 101 to 102, Lys117, and 124 to 126 contribute to the substrate site; these read HR and KKE.

The protein belongs to the MoaE family. MOCS2B subfamily. In terms of assembly, heterotetramer; composed of 2 small (Mocs2A) and 2 large (Mocs2B) subunits.

The protein localises to the cytoplasm. It catalyses the reaction 2 [molybdopterin-synthase sulfur-carrier protein]-C-terminal-Gly-aminoethanethioate + cyclic pyranopterin phosphate + H2O = molybdopterin + 2 [molybdopterin-synthase sulfur-carrier protein]-C-terminal Gly-Gly + 2 H(+). It participates in cofactor biosynthesis; molybdopterin biosynthesis. Its function is as follows. Catalytic subunit of the molybdopterin synthase complex, a complex that catalyzes the conversion of precursor Z into molybdopterin. Acts by mediating the incorporation of 2 sulfur atoms from thiocarboxylated Mocs2A into precursor Z to generate a dithiolene group. This Drosophila erecta (Fruit fly) protein is Molybdopterin synthase catalytic subunit.